Reading from the N-terminus, the 155-residue chain is Ribonuclease HI (155 aa).

One can recognise an RNase H type-1 domain in the interval 1–142 (MTKQVEIFTD…CDELARAAAE (142 aa)). Positions 10, 48, 70, and 134 each coordinate Mg(2+).

It belongs to the RNase H family. In terms of assembly, monomer. The cofactor is Mg(2+).

Its subcellular location is the cytoplasm. It catalyses the reaction Endonucleolytic cleavage to 5'-phosphomonoester.. Its function is as follows. Endonuclease that specifically degrades the RNA of RNA-DNA hybrids. The polypeptide is Ribonuclease HI (Vibrio vulnificus (strain CMCP6)).